Consider the following 85-residue polypeptide: Conotoxin Lt28.5 (85 aa).

Residues M1–A21 form the signal peptide. Positions V22 to K40 are excised as a propeptide.

Belongs to the conotoxin D superfamily. In terms of processing, contains 5 disulfide bonds. Expressed by the venom duct.

The protein resides in the secreted. Probable neurotoxin. This is Conotoxin Lt28.5 from Conus litteratus (Lettered cone).